The primary structure comprises 155 residues: Ribosome maturation factor RimP (155 aa).

This sequence belongs to the RimP family.

The protein localises to the cytoplasm. Its function is as follows. Required for maturation of 30S ribosomal subunits. The sequence is that of Ribosome maturation factor RimP from Exiguobacterium sibiricum (strain DSM 17290 / CCUG 55495 / CIP 109462 / JCM 13490 / 255-15).